A 659-amino-acid polypeptide reads, in one-letter code: A-type ATP synthase subunit I (659 aa).

The next 8 helical transmembrane spans lie at 376-396 (FFFG…IISA), 415-435 (IMLW…SYCG), 460-480 (MIAL…GFIV), 489-509 (GAIF…LFAL), 518-538 (LIVK…EVLA), 542-562 (MAVL…LSYA), 568-588 (ALAT…IWGI), and 590-610 (IASV…GHIF).

The protein belongs to the V-ATPase 116 kDa subunit family. In terms of assembly, has multiple subunits with at least A(3), B(3), C, D, E, F, H, I and proteolipid K(x).

It is found in the cell membrane. In terms of biological role, component of the A-type ATP synthase that produces ATP from ADP in the presence of a proton gradient across the membrane. This is A-type ATP synthase subunit I from Pyrococcus horikoshii (strain ATCC 700860 / DSM 12428 / JCM 9974 / NBRC 100139 / OT-3).